The sequence spans 268 residues: Tryptophan synthase alpha chain (268 aa).

Residues Glu-49 and Asp-60 each act as proton acceptor in the active site.

Belongs to the TrpA family. Tetramer of two alpha and two beta chains.

The enzyme catalyses (1S,2R)-1-C-(indol-3-yl)glycerol 3-phosphate + L-serine = D-glyceraldehyde 3-phosphate + L-tryptophan + H2O. It functions in the pathway amino-acid biosynthesis; L-tryptophan biosynthesis; L-tryptophan from chorismate: step 5/5. In terms of biological role, the alpha subunit is responsible for the aldol cleavage of indoleglycerol phosphate to indole and glyceraldehyde 3-phosphate. This chain is Tryptophan synthase alpha chain, found in Escherichia coli O139:H28 (strain E24377A / ETEC).